The chain runs to 177 residues: Large ribosomal subunit protein uL6 (177 aa).

Belongs to the universal ribosomal protein uL6 family. Part of the 50S ribosomal subunit.

Functionally, this protein binds to the 23S rRNA, and is important in its secondary structure. It is located near the subunit interface in the base of the L7/L12 stalk, and near the tRNA binding site of the peptidyltransferase center. The polypeptide is Large ribosomal subunit protein uL6 (Psychromonas ingrahamii (strain DSM 17664 / CCUG 51855 / 37)).